The sequence spans 258 residues: NAD kinase (258 aa).

The active-site Proton acceptor is the D45. Residues D45 to G46, N117 to E118, D147, A155, T158 to S163, and A182 each bind NAD(+).

Belongs to the NAD kinase family. A divalent metal cation serves as cofactor.

Its subcellular location is the cytoplasm. It catalyses the reaction NAD(+) + ATP = ADP + NADP(+) + H(+). Involved in the regulation of the intracellular balance of NAD and NADP, and is a key enzyme in the biosynthesis of NADP. Catalyzes specifically the phosphorylation on 2'-hydroxyl of the adenosine moiety of NAD to yield NADP. The chain is NAD kinase from Xanthomonas campestris pv. campestris (strain 8004).